Reading from the N-terminus, the 295-residue chain is Pyridoxal 5'-phosphate synthase subunit PdxS (295 aa).

Residue D25 participates in D-ribose 5-phosphate binding. The Schiff-base intermediate with D-ribose 5-phosphate role is filled by K82. Residue G154 coordinates D-ribose 5-phosphate. R166 is a D-glyceraldehyde 3-phosphate binding site. D-ribose 5-phosphate-binding positions include G215 and 236–237 (GS).

The protein belongs to the PdxS/SNZ family. In the presence of PdxT, forms a dodecamer of heterodimers.

The catalysed reaction is aldehydo-D-ribose 5-phosphate + D-glyceraldehyde 3-phosphate + L-glutamine = pyridoxal 5'-phosphate + L-glutamate + phosphate + 3 H2O + H(+). The protein operates within cofactor biosynthesis; pyridoxal 5'-phosphate biosynthesis. Its function is as follows. Catalyzes the formation of pyridoxal 5'-phosphate from ribose 5-phosphate (RBP), glyceraldehyde 3-phosphate (G3P) and ammonia. The ammonia is provided by the PdxT subunit. Can also use ribulose 5-phosphate and dihydroxyacetone phosphate as substrates, resulting from enzyme-catalyzed isomerization of RBP and G3P, respectively. The sequence is that of Pyridoxal 5'-phosphate synthase subunit PdxS from Shouchella clausii (strain KSM-K16) (Alkalihalobacillus clausii).